A 377-amino-acid polypeptide reads, in one-letter code: MSNGIVIIGSGFAARQLVKNIRKQDTGIPLTLIAADSMDEYNKPDLSHVISQGQRADDLTRQTAGEFAEQFNLRLFPHTWVTDIDAEAHVVKSQNNQWQYDKLVLATGANAFVPPVPGRELMLTLNSQQEYRACETQLRDARRVLIVGGGLIGSELAMDFCRAGKAVTLIDNAASILASLMPPEVSSRLQHRLTEMGVHLLLKSQLQGLEKTNSGILATLDRQRSTEVDAVIAATGLRPETALARRAGLTINRGVCVDSYLQTSNADIYALGDCAEINGQVLPFLQPIQLSAMVLAKNLLGNNTPLKLPAMLVKIKTPELPLHLAGETQRRDLRWQICTESQGMVARGVDDADQLRAFVVSEDRMKEAFGLLKTLPM.

The protein belongs to the FAD-dependent oxidoreductase family. FAD serves as cofactor.

Its subcellular location is the cytoplasm. It catalyses the reaction 2 reduced [nitric oxide reductase rubredoxin domain] + NAD(+) + H(+) = 2 oxidized [nitric oxide reductase rubredoxin domain] + NADH. Its pathway is nitrogen metabolism; nitric oxide reduction. One of at least two accessory proteins for anaerobic nitric oxide (NO) reductase. Reduces the rubredoxin moiety of NO reductase. This Escherichia fergusonii (strain ATCC 35469 / DSM 13698 / CCUG 18766 / IAM 14443 / JCM 21226 / LMG 7866 / NBRC 102419 / NCTC 12128 / CDC 0568-73) protein is Nitric oxide reductase FlRd-NAD(+) reductase.